Here is a 364-residue protein sequence, read N- to C-terminus: MIKRIIVNVKTGSYPIIIGYGLLNKDFMSYWTIKNGDLVVIITNDRVAPIYLNRLYNSFNACEIVTDQCILPDGEQNKSLSMLNKILTQLLSKNYDRDTILVALGGGVIGDLTGFAASVYQRGIRFIQVPTTLLAQVDASIGGKTGVNHVFGKNMIGSFHQPISVMVDLDCLCTLSEKEFRSGLSEIIKYAVALDSAFFNWLENNLDYLLMLNPQSLMYCVYRCCELKRSIVIMDEFDQGIRSVLNLGHTYGHAIESYLGYSQWSHGEAIAAGLMMAVSTALHIGGLISFHDAIRIKLLLKRANLPICGPEEMKPQDYIKYMIRDKKSRLGRINLVLPKSIGKTQVFVNVNTDVILNAIENIDI.

NAD(+) is bound by residues Asp73–Lys78, Gly107–Asp111, Thr131–Thr132, Lys144, Lys153, and Cys171–Thr174. Zn(2+)-binding residues include Glu186, His249, and His266.

The protein belongs to the sugar phosphate cyclases superfamily. Dehydroquinate synthase family. NAD(+) serves as cofactor. The cofactor is Co(2+). It depends on Zn(2+) as a cofactor.

The protein resides in the cytoplasm. It catalyses the reaction 7-phospho-2-dehydro-3-deoxy-D-arabino-heptonate = 3-dehydroquinate + phosphate. It participates in metabolic intermediate biosynthesis; chorismate biosynthesis; chorismate from D-erythrose 4-phosphate and phosphoenolpyruvate: step 2/7. Functionally, catalyzes the conversion of 3-deoxy-D-arabino-heptulosonate 7-phosphate (DAHP) to dehydroquinate (DHQ). This chain is 3-dehydroquinate synthase, found in Blochmanniella floridana.